The chain runs to 150 residues: MKQFEIVTEPIQTEQHRDFTLNPHQGAVVVFTGHVREWTKGIRTEHLEYEAYIPMAEKKLAQIGDEINEQWPGTIVSIVHRIGPLKISDIAVLIAVSSPHRKDAYAANEYAIDRIKEVVPIWKKEIWEDGAEWIGHQRGYHDDAVERGQN.

Substrate-binding positions include 34–36 (HVR), Thr-44, 100–101 (HR), Lys-116, and 123–125 (KKE).

It belongs to the MoaE family. Heterotetramer of 2 MoaD subunits and 2 MoaE subunits. Also stable as homodimer. The enzyme changes between these two forms during catalysis.

It carries out the reaction 2 [molybdopterin-synthase sulfur-carrier protein]-C-terminal-Gly-aminoethanethioate + cyclic pyranopterin phosphate + H2O = molybdopterin + 2 [molybdopterin-synthase sulfur-carrier protein]-C-terminal Gly-Gly + 2 H(+). It functions in the pathway cofactor biosynthesis; molybdopterin biosynthesis. In terms of biological role, converts molybdopterin precursor Z into molybdopterin. This requires the incorporation of two sulfur atoms into precursor Z to generate a dithiolene group. The sulfur is provided by MoaD. The polypeptide is Molybdopterin synthase catalytic subunit (moaE) (Staphylococcus carnosus (strain TM300)).